Consider the following 93-residue polypeptide: Small ribosomal subunit protein uS19 (93 aa).

The protein belongs to the universal ribosomal protein uS19 family.

In terms of biological role, protein S19 forms a complex with S13 that binds strongly to the 16S ribosomal RNA. The sequence is that of Small ribosomal subunit protein uS19 from Ehrlichia ruminantium (strain Welgevonden).